Here is a 403-residue protein sequence, read N- to C-terminus: Coenzyme A biosynthesis bifunctional protein CoaBC (403 aa).

The segment at 1–197 (MLHHVKLIYA…LHPKSLEGKR (197 aa)) is phosphopantothenoylcysteine decarboxylase. The tract at residues 198–403 (VLVTAGATRE…RLWDEIEKML (206 aa)) is phosphopantothenate--cysteine ligase. CTP-binding residues include D287, K297, and F330.

This sequence in the N-terminal section; belongs to the HFCD (homo-oligomeric flavin containing Cys decarboxylase) superfamily. The protein in the C-terminal section; belongs to the PPC synthetase family. It depends on Mg(2+) as a cofactor. FMN is required as a cofactor.

The catalysed reaction is N-[(R)-4-phosphopantothenoyl]-L-cysteine + H(+) = (R)-4'-phosphopantetheine + CO2. It catalyses the reaction (R)-4'-phosphopantothenate + L-cysteine + CTP = N-[(R)-4-phosphopantothenoyl]-L-cysteine + CMP + diphosphate + H(+). It functions in the pathway cofactor biosynthesis; coenzyme A biosynthesis. Catalyzes two sequential steps in the biosynthesis of coenzyme A. In the first step cysteine is conjugated to 4'-phosphopantothenate to form 4-phosphopantothenoylcysteine. In the second step the latter compound is decarboxylated to form 4'-phosphopantotheine. This Thermococcus kodakarensis (strain ATCC BAA-918 / JCM 12380 / KOD1) (Pyrococcus kodakaraensis (strain KOD1)) protein is Coenzyme A biosynthesis bifunctional protein CoaBC.